The primary structure comprises 179 residues: Large ribosomal subunit protein uL6 (179 aa).

This sequence belongs to the universal ribosomal protein uL6 family. In terms of assembly, part of the 50S ribosomal subunit.

This protein binds to the 23S rRNA, and is important in its secondary structure. It is located near the subunit interface in the base of the L7/L12 stalk, and near the tRNA binding site of the peptidyltransferase center. The polypeptide is Large ribosomal subunit protein uL6 (Fructilactobacillus sanfranciscensis (Lactobacillus sanfranciscensis)).